Reading from the N-terminus, the 524-residue chain is RNA-splicing ligase RtcB homolog 1 (524 aa).

Aspartate 141, cysteine 144, histidine 249, histidine 281, and histidine 372 together coordinate Mn(2+). Residue asparagine 248–glutamate 252 coordinates GMP. GMP contacts are provided by residues histidine 372–asparagine 373, glycine 421–methionine 424, serine 428, histidine 447–glycine 450, and lysine 523. Histidine 447 serves as the catalytic GMP-histidine intermediate.

This sequence belongs to the RtcB family. As to quaternary structure, catalytic component of the tRNA-splicing ligase complex. Requires Mn(2+) as cofactor.

The catalysed reaction is a 3'-end 3'-phospho-ribonucleotide-RNA + a 5'-end dephospho-ribonucleoside-RNA + GTP = a ribonucleotidyl-ribonucleotide-RNA + GMP + diphosphate. The enzyme catalyses a 3'-end 2',3'-cyclophospho-ribonucleotide-RNA + a 5'-end dephospho-ribonucleoside-RNA + GTP + H2O = a ribonucleotidyl-ribonucleotide-RNA + GMP + diphosphate + H(+). Functionally, catalytic subunit of the tRNA-splicing ligase complex that acts by directly joining spliced tRNA halves to mature-sized tRNAs by incorporating the precursor-derived splice junction phosphate into the mature tRNA as a canonical 3',5'-phosphodiester. May act as an RNA ligase with broad substrate specificity, and may function toward other RNAs. The polypeptide is RNA-splicing ligase RtcB homolog 1 (Entamoeba histolytica (strain ATCC 30459 / HM-1:IMSS / ABRM)).